Reading from the N-terminus, the 406-residue chain is 2,3-bisphosphoglycerate-independent phosphoglycerate mutase (406 aa).

This sequence belongs to the BPG-independent phosphoglycerate mutase family. A-PGAM subfamily.

The catalysed reaction is (2R)-2-phosphoglycerate = (2R)-3-phosphoglycerate. Its pathway is carbohydrate degradation; glycolysis; pyruvate from D-glyceraldehyde 3-phosphate: step 3/5. In terms of biological role, catalyzes the interconversion of 2-phosphoglycerate and 3-phosphoglycerate. This Methanococcus maripaludis (strain C5 / ATCC BAA-1333) protein is 2,3-bisphosphoglycerate-independent phosphoglycerate mutase.